The primary structure comprises 159 residues: Endoribonuclease YbeY (159 aa).

Zn(2+) is bound by residues H125, H129, and H135.

It belongs to the endoribonuclease YbeY family. Requires Zn(2+) as cofactor.

The protein resides in the cytoplasm. Single strand-specific metallo-endoribonuclease involved in late-stage 70S ribosome quality control and in maturation of the 3' terminus of the 16S rRNA. This Ligilactobacillus salivarius (strain UCC118) (Lactobacillus salivarius) protein is Endoribonuclease YbeY.